A 438-amino-acid polypeptide reads, in one-letter code: Envelope glycoprotein M (438 aa).

Residues 1-13 (MAGSAQPAAVHWR) lie on the Intravirion side of the membrane. The chain crosses the membrane as a helical span at residues 14–34 (LWLAQVGVFAGLALLLLITLI). The Virion surface segment spans residues 35-88 (GAASPGAGLPCFYAAIVNYNARNLSADGGAWAQRELGARHPALFLETPTTAAFS). Residues 89–109 (AYTAVVLLAVAAFDVAAAIII) form a helical membrane-spanning segment. The Intravirion portion of the chain corresponds to 110 to 132 (RRENSGGFAAAYHMNALATLATP). Residues 133–153 (PGALLLGALAAWTLQAAVLLL) form a helical membrane-spanning segment. At 154–158 (SHKIM) the chain is on the virion surface side. Residues 159 to 179 (VLAAATYLAHLAPPAAFVGLF) form a helical membrane-spanning segment. Residues 180 to 212 (CTAGLPGAEYAQAVHALRERSPRAHRLLGPGRA) lie on the Intravirion side of the membrane. Residues 213–233 (VMINLAGGLLALIIGTAPLML) traverse the membrane as a helical segment. Over 234 to 248 (GQLLGAGLGLSLAQT) the chain is Virion surface. The helical transmembrane segment at 249-269 (VVAGVTVFCLAAVLFLVLTEL) threads the bilayer. Residues 270-276 (VLSRYTQ) are Intravirion-facing. A helical transmembrane segment spans residues 277-297 (VLPGPAFGTLVAASCIAVASH). The Virion surface segment spans residues 298–317 (DYFHQLRGVVRTQAPRAAAR). A helical transmembrane segment spans residues 318–338 (VKLALAGVALLAVAMLVLRLV). The Intravirion segment spans residues 339-438 (RACLHHRRKG…PRSPPPAHVK (100 aa)). Residues 395–438 (EEAVYEAHAPPRPPTIPLRRPEVPHSRASHPRPPPRSPPPAHVK) form a disordered region. Pro residues predominate over residues 425 to 438 (PRPPPRSPPPAHVK).

The protein belongs to the herpesviridae glycoprotein M family. In terms of assembly, interacts (via N-terminus) with gN (via N-terminus). The gM-gN heterodimer forms the gCII complex. Post-translationally, N-glycosylated. It is not O-glycosylated.

Its subcellular location is the virion membrane. The protein resides in the host Golgi apparatus. It is found in the host trans-Golgi network. It localises to the host endosome membrane. The protein localises to the host nucleus inner membrane. Its function is as follows. Envelope glycoprotein important for virion assembly and egress. Plays a role in the correct incorporation of gH-gL into virion membrane. Directs the glycoprotein N (gN) to the host trans-Golgi network. The sequence is that of Envelope glycoprotein M from Bovine herpesvirus 1.1 (strain Cooper) (BoHV-1).